Consider the following 1272-residue polypeptide: uncharacterized protein (1272 aa).

3 coiled-coil regions span residues 185-212, 246-274, and 607-640; these read IEFL…EAVN, KNSA…YLDA, and ALGK…NTVI. Positions 1179–1231 are disordered; that stretch reads ELPETSQQPVVPTPPATRPSSPIPPESDILTEEEQLEEQPPRQQQATRKTTTT. The span at 1189-1203 shows a compositional bias: pro residues; that stretch reads VPTPPATRPSSPIPP. Over residues 1219–1231 the composition is skewed to low complexity; sequence PRQQQATRKTTTT.

This is an uncharacterized protein from Magallana gigas (Pacific oyster).